Here is an 847-residue protein sequence, read N- to C-terminus: uncharacterized protein (847 aa).

This is an uncharacterized protein from Penicillium chrysogenum virus (isolate Caston/2003) (PcV).